We begin with the raw amino-acid sequence, 343 residues long: Ribosomal RNA small subunit methyltransferase C (343 aa).

This sequence belongs to the methyltransferase superfamily. RsmC family. Monomer.

The protein resides in the cytoplasm. The catalysed reaction is guanosine(1207) in 16S rRNA + S-adenosyl-L-methionine = N(2)-methylguanosine(1207) in 16S rRNA + S-adenosyl-L-homocysteine + H(+). In terms of biological role, specifically methylates the guanine in position 1207 of 16S rRNA in the 30S particle. This Escherichia coli (strain K12 / DH10B) protein is Ribosomal RNA small subunit methyltransferase C.